A 145-amino-acid polypeptide reads, in one-letter code: Ribosome maturation factor RimP (145 aa).

This sequence belongs to the RimP family.

The protein localises to the cytoplasm. Required for maturation of 30S ribosomal subunits. The sequence is that of Ribosome maturation factor RimP from Borreliella burgdorferi (strain ATCC 35210 / DSM 4680 / CIP 102532 / B31) (Borrelia burgdorferi).